The chain runs to 249 residues: UPF0524 protein C3orf70 homolog B (249 aa).

Positions 174 to 230 are disordered; it reads GPKMGHCSSPSTSEDSGINALGGHFLESCEEESEEEDELSTDGHSSPGSLWDQDECT. Over residues 201–213 the composition is skewed to acidic residues; the sequence is SCEEESEEEDELS.

This sequence belongs to the UPF0524 family.

In terms of biological role, plays a role in neuronal and neurobehavioral development. Required for normal expression of the postmitotic and mature neuron markers elavl3 and eno2 and neurobehaviors related to circadian rhythm and altered light-dark conditions. The sequence is that of UPF0524 protein C3orf70 homolog B from Danio rerio (Zebrafish).